Here is a 712-residue protein sequence, read N- to C-terminus: WD repeat-containing protein 91 (712 aa).

Positions 148-180 form a coiled coil; that stretch reads RRTNQVQEENEVLRQKLFALQAEIHRLKKEEQQ. Residue Ser-221 is modified to Phosphoserine. Positions 230 to 243 are enriched in low complexity; it reads LLPQSKKSPSRLSP. The tract at residues 230–336 is disordered; sequence LLPQSKKSPS…EAEPCPELHT (107 aa). Phosphoserine occurs at positions 253 and 258. A compositionally biased stretch (basic and acidic residues) spans 297–308; the sequence is RLQDHGKERKEL. 7 WD repeats span residues 371–410, 413–453, 480–520, 525–564, 567–606, 629–667, and 674–712; these read EHHSSIMHCRVDCSGRRVASLDVDGVIKVWSFNPIMQTKA, ISKS…NLCE, AAPS…QQLQ, PEPIAINCTAFNHNGNLLVTGAADGVIRLFDMQQHECAMS, AHYGEVYSVEFSYDENTVYSIGEDGKFIQWNIHKSGLKVS, VQVPRGRLFAFDSEGNYMLTCSATGGVIYKLGGDEKVLE, and GHRAPVVTVDWSTAMDCGTCLTASMDGKIKLTTLLAHKA.

Belongs to the WD repeat WDR91 family. As to quaternary structure, interacts with WDR81; involved in early to late endosome cargo transport. Interacts with BECN1; negatively regulates the PI3 kinase/PI3K activity associated with endosomal membranes.

The protein resides in the early endosome membrane. The protein localises to the late endosome membrane. Its function is as follows. Functions as a negative regulator of the PI3 kinase/PI3K activity associated with endosomal membranes via BECN1, a core subunit of the PI3K complex. By modifying the phosphatidylinositol 3-phosphate/PtdInsP3 content of endosomal membranes may regulate endosome fusion, recycling, sorting and early to late endosome transport. It is for instance, required for the delivery of cargos like BST2/tetherin from early to late endosome and thereby participates indirectly to their degradation by the lysosome. May play a role in meiosis. The protein is WD repeat-containing protein 91 of Pongo abelii (Sumatran orangutan).